The following is a 459-amino-acid chain: Cysteine--tRNA ligase (459 aa).

Zn(2+) is bound at residue Cys-28. The 'HIGH' region signature appears at 30–40 (VTVYDLCHFGH). Zn(2+) contacts are provided by Cys-209, His-234, and Glu-238. Positions 266–270 (KMSKS) match the 'KMSKS' region motif. An ATP-binding site is contributed by Lys-269.

This sequence belongs to the class-I aminoacyl-tRNA synthetase family. Monomer. Zn(2+) is required as a cofactor.

The protein localises to the cytoplasm. The catalysed reaction is tRNA(Cys) + L-cysteine + ATP = L-cysteinyl-tRNA(Cys) + AMP + diphosphate. The chain is Cysteine--tRNA ligase from Glaesserella parasuis serovar 5 (strain SH0165) (Haemophilus parasuis).